The following is a 291-amino-acid chain: 4-hydroxy-tetrahydrodipicolinate synthase (291 aa).

T44 is a binding site for pyruvate. Y132 functions as the Proton donor/acceptor in the catalytic mechanism. K160 (schiff-base intermediate with substrate) is an active-site residue. I202 contacts pyruvate.

It belongs to the DapA family. In terms of assembly, homotetramer; dimer of dimers.

It is found in the cytoplasm. It carries out the reaction L-aspartate 4-semialdehyde + pyruvate = (2S,4S)-4-hydroxy-2,3,4,5-tetrahydrodipicolinate + H2O + H(+). Its pathway is amino-acid biosynthesis; L-lysine biosynthesis via DAP pathway; (S)-tetrahydrodipicolinate from L-aspartate: step 3/4. Catalyzes the condensation of (S)-aspartate-beta-semialdehyde [(S)-ASA] and pyruvate to 4-hydroxy-tetrahydrodipicolinate (HTPA). The polypeptide is 4-hydroxy-tetrahydrodipicolinate synthase (Roseobacter denitrificans (strain ATCC 33942 / OCh 114) (Erythrobacter sp. (strain OCh 114))).